Reading from the N-terminus, the 259-residue chain is Type III pantothenate kinase (259 aa).

6 to 13 contributes to the ATP binding site; the sequence is DCGNTNTV. 107-110 is a binding site for substrate; that stretch reads GPDR. Aspartate 109 serves as the catalytic Proton acceptor. Aspartate 129 serves as a coordination point for K(+). Threonine 132 serves as a coordination point for ATP. Threonine 184 lines the substrate pocket.

It belongs to the type III pantothenate kinase family. As to quaternary structure, homodimer. The cofactor is NH4(+). K(+) is required as a cofactor.

It localises to the cytoplasm. It carries out the reaction (R)-pantothenate + ATP = (R)-4'-phosphopantothenate + ADP + H(+). Its pathway is cofactor biosynthesis; coenzyme A biosynthesis; CoA from (R)-pantothenate: step 1/5. In terms of biological role, catalyzes the phosphorylation of pantothenate (Pan), the first step in CoA biosynthesis. The protein is Type III pantothenate kinase of Ruegeria pomeroyi (strain ATCC 700808 / DSM 15171 / DSS-3) (Silicibacter pomeroyi).